Reading from the N-terminus, the 212-residue chain is MTKGIFISFEGPDGAGKTTVLEAILPQLKKLVAKEVITTREPGGVAIAESIRDLILDVNHTNMDDKTELLLYIAARRQHLVERILPELKKGNLVLVDRFIDSSVAYQGYGRGLDADAVTWLNNFATDGLQPDLTLYFDVDSQIGLTRIEKNKEREVNRLDLEQLDMHRRVRSGYLKLAQENPDRIVTIDAARPLEEVITDALFIIKQRCLEK.

Residue 11-18 (GPDGAGKT) participates in ATP binding.

This sequence belongs to the thymidylate kinase family.

The catalysed reaction is dTMP + ATP = dTDP + ADP. In terms of biological role, phosphorylation of dTMP to form dTDP in both de novo and salvage pathways of dTTP synthesis. The polypeptide is Thymidylate kinase (Streptococcus mutans serotype c (strain ATCC 700610 / UA159)).